The chain runs to 240 residues: Adapter protein MecA (240 aa).

The tract at residues 118 to 138 (EQRAQQQKHSHKSEQKQTKQR) is disordered.

The protein belongs to the MecA family. In terms of assembly, homodimer.

Functionally, enables the recognition and targeting of unfolded and aggregated proteins to the ClpC protease or to other proteins involved in proteolysis. The protein is Adapter protein MecA of Staphylococcus haemolyticus (strain JCSC1435).